Consider the following 168-residue polypeptide: Endoribonuclease YbeY (168 aa).

Residues His-125, His-129, and His-135 each coordinate Zn(2+).

Belongs to the endoribonuclease YbeY family. Zn(2+) serves as cofactor.

It is found in the cytoplasm. Functionally, single strand-specific metallo-endoribonuclease involved in late-stage 70S ribosome quality control and in maturation of the 3' terminus of the 16S rRNA. This Rhodopseudomonas palustris (strain BisB18) protein is Endoribonuclease YbeY.